The sequence spans 122 residues: Large ribosomal subunit protein uL14 (122 aa).

This sequence belongs to the universal ribosomal protein uL14 family. In terms of assembly, part of the 50S ribosomal subunit. Forms a cluster with proteins L3 and L19. In the 70S ribosome, L14 and L19 interact and together make contacts with the 16S rRNA in bridges B5 and B8.

Binds to 23S rRNA. Forms part of two intersubunit bridges in the 70S ribosome. This chain is Large ribosomal subunit protein uL14, found in Bacillus anthracis (strain A0248).